The chain runs to 367 residues: Biotin synthase (367 aa).

The 236-residue stretch at 73–308 folds into the Radical SAM core domain; the sequence is CCGNTVDLCS…EQIIRYAGGR (236 aa). The [4Fe-4S] cluster site is built by cysteine 91, cysteine 95, and cysteine 98. Cysteine 136, cysteine 173, cysteine 233, and arginine 303 together coordinate [2Fe-2S] cluster.

This sequence belongs to the radical SAM superfamily. Biotin synthase family. Homodimer. It depends on [4Fe-4S] cluster as a cofactor. [2Fe-2S] cluster is required as a cofactor.

The catalysed reaction is (4R,5S)-dethiobiotin + (sulfur carrier)-SH + 2 reduced [2Fe-2S]-[ferredoxin] + 2 S-adenosyl-L-methionine = (sulfur carrier)-H + biotin + 2 5'-deoxyadenosine + 2 L-methionine + 2 oxidized [2Fe-2S]-[ferredoxin]. It participates in cofactor biosynthesis; biotin biosynthesis; biotin from 7,8-diaminononanoate: step 2/2. In terms of biological role, catalyzes the conversion of dethiobiotin (DTB) to biotin by the insertion of a sulfur atom into dethiobiotin via a radical-based mechanism. The sequence is that of Biotin synthase from Picosynechococcus sp. (strain ATCC 27264 / PCC 7002 / PR-6) (Agmenellum quadruplicatum).